The chain runs to 396 residues: Elongation factor Tu (396 aa).

Positions 11–205 (KPHVNIGTIG…TVDEYIPTPE (195 aa)) constitute a tr-type G domain. The segment at 20–27 (GHVDHGKT) is G1. 20-27 (GHVDHGKT) is a GTP binding site. Threonine 27 contacts Mg(2+). The G2 stretch occupies residues 61-65 (GITIN). Positions 82-85 (DAPG) are G3. Residues 82–86 (DAPGH) and 137–140 (NKCD) each bind GTP. The G4 stretch occupies residues 137-140 (NKCD). The tract at residues 175 to 177 (SAL) is G5.

Belongs to the TRAFAC class translation factor GTPase superfamily. Classic translation factor GTPase family. EF-Tu/EF-1A subfamily. In terms of assembly, monomer.

The protein localises to the cytoplasm. The enzyme catalyses GTP + H2O = GDP + phosphate + H(+). GTP hydrolase that promotes the GTP-dependent binding of aminoacyl-tRNA to the A-site of ribosomes during protein biosynthesis. This is Elongation factor Tu from Lactobacillus helveticus (strain DPC 4571).